Consider the following 201-residue polypeptide: MDKFTTLEGVAAPLKIINVDTDMIIPKQYLKTIKRTGLGKGLFSEQRYQDDGSENPDFILNKPAYRSAKILVAGDNFGCGSSREHAPWALLDFGIRCVISTSFGDIFYNNCFKNGVLPIRVSQDDLDKLFDDAERGSNATVTIDLPAQEIRGPDGGTVKFEIDPFRKHCLINGLDDIGLTLEKKASIDSYEDKLKTERAWA.

It belongs to the LeuD family. LeuD type 1 subfamily. Heterodimer of LeuC and LeuD.

It catalyses the reaction (2R,3S)-3-isopropylmalate = (2S)-2-isopropylmalate. It participates in amino-acid biosynthesis; L-leucine biosynthesis; L-leucine from 3-methyl-2-oxobutanoate: step 2/4. Catalyzes the isomerization between 2-isopropylmalate and 3-isopropylmalate, via the formation of 2-isopropylmaleate. This Rhodopseudomonas palustris (strain HaA2) protein is 3-isopropylmalate dehydratase small subunit.